A 237-amino-acid chain; its full sequence is Ribosomal RNA small subunit methyltransferase G (237 aa).

Residues Gly-78, Phe-83, 129-130, and Arg-148 each bind S-adenosyl-L-methionine; that span reads AE.

Belongs to the methyltransferase superfamily. RNA methyltransferase RsmG family.

It is found in the cytoplasm. Functionally, specifically methylates the N7 position of a guanine in 16S rRNA. The polypeptide is Ribosomal RNA small subunit methyltransferase G (Streptococcus pyogenes serotype M2 (strain MGAS10270)).